The chain runs to 625 residues: Glucose dehydrogenase [FAD, quinone] (625 aa).

Residues 1 to 42 (MSASASACDCLVGVPTGPTLASTCGGSAFMLFMGLLEVFIRS) form the signal peptide. 66–95 (DFIVIGGGSAGSVVASRLSEVPQWKVLLIE) contacts FAD. His-544 serves as the catalytic Proton acceptor. Sec-613 is a non-standard amino acid (selenocysteine).

This sequence belongs to the GMC oxidoreductase family. Requires FAD as cofactor.

Its subcellular location is the secreted. It carries out the reaction a quinone + D-glucose = D-glucono-1,5-lactone + a quinol. Essential for cuticular modification during development. This chain is Glucose dehydrogenase [FAD, quinone] (Gld), found in Drosophila melanogaster (Fruit fly).